Here is a 257-residue protein sequence, read N- to C-terminus: Imidazole glycerol phosphate synthase subunit HisF (257 aa).

Residues D11 and D130 contribute to the active site.

Belongs to the HisA/HisF family. In terms of assembly, heterodimer of HisH and HisF.

It localises to the cytoplasm. It catalyses the reaction 5-[(5-phospho-1-deoxy-D-ribulos-1-ylimino)methylamino]-1-(5-phospho-beta-D-ribosyl)imidazole-4-carboxamide + L-glutamine = D-erythro-1-(imidazol-4-yl)glycerol 3-phosphate + 5-amino-1-(5-phospho-beta-D-ribosyl)imidazole-4-carboxamide + L-glutamate + H(+). Its pathway is amino-acid biosynthesis; L-histidine biosynthesis; L-histidine from 5-phospho-alpha-D-ribose 1-diphosphate: step 5/9. IGPS catalyzes the conversion of PRFAR and glutamine to IGP, AICAR and glutamate. The HisF subunit catalyzes the cyclization activity that produces IGP and AICAR from PRFAR using the ammonia provided by the HisH subunit. The protein is Imidazole glycerol phosphate synthase subunit HisF of Shewanella sp. (strain MR-4).